The following is a 488-amino-acid chain: Photosystem II CP43 reaction center protein (488 aa).

The propeptide occupies 1-29 (MTKVFALGWLLKINLMKTLYSLRRFYHVE). 5 helical membrane-spanning segments follow: residues 84–108 (LFEV…PHLA), 149–170 (LIGP…RDKN), 193–215 (KALF…RFVS), 270–290 (KPFA…LSYS), and 306–327 (WYNN…ASQA). E382 contacts [CaMn4O5] cluster. A helical membrane pass occupies residues 462–486 (RARAAAAGFEKGINRENEPVLSMRP).

This sequence belongs to the PsbB/PsbC family. PsbC subfamily. PSII is composed of 1 copy each of membrane proteins PsbA, PsbB, PsbC, PsbD, PsbE, PsbF, PsbH, PsbI, PsbJ, PsbK, PsbL, PsbM, PsbT, PsbX, PsbY, PsbZ, Psb30/Ycf12, at least 3 peripheral proteins of the oxygen-evolving complex and a large number of cofactors. It forms dimeric complexes. Binds multiple chlorophylls and provides some of the ligands for the Ca-4Mn-5O cluster of the oxygen-evolving complex. It may also provide a ligand for a Cl- that is required for oxygen evolution. PSII binds additional chlorophylls, carotenoids and specific lipids. is required as a cofactor.

Its subcellular location is the plastid. The protein localises to the chloroplast thylakoid membrane. Functionally, one of the components of the core complex of photosystem II (PSII). It binds chlorophyll and helps catalyze the primary light-induced photochemical processes of PSII. PSII is a light-driven water:plastoquinone oxidoreductase, using light energy to abstract electrons from H(2)O, generating O(2) and a proton gradient subsequently used for ATP formation. The protein is Photosystem II CP43 reaction center protein of Pyropia yezoensis (Susabi-nori).